The primary structure comprises 905 residues: DNA gyrase subunit A (905 aa).

The Topo IIA-type catalytic domain occupies 35 to 524 (IPDVRDGLKP…GEFDQDIEDL (490 aa)). Y123 (O-(5'-phospho-DNA)-tyrosine intermediate) is an active-site residue. The GyrA-box motif lies at 551–557 (QKRGGKG).

Belongs to the type II topoisomerase GyrA/ParC subunit family. Heterotetramer, composed of two GyrA and two GyrB chains. In the heterotetramer, GyrA contains the active site tyrosine that forms a transient covalent intermediate with DNA, while GyrB binds cofactors and catalyzes ATP hydrolysis.

The protein resides in the cytoplasm. It catalyses the reaction ATP-dependent breakage, passage and rejoining of double-stranded DNA.. In terms of biological role, a type II topoisomerase that negatively supercoils closed circular double-stranded (ds) DNA in an ATP-dependent manner to modulate DNA topology and maintain chromosomes in an underwound state. Negative supercoiling favors strand separation, and DNA replication, transcription, recombination and repair, all of which involve strand separation. Also able to catalyze the interconversion of other topological isomers of dsDNA rings, including catenanes and knotted rings. Type II topoisomerases break and join 2 DNA strands simultaneously in an ATP-dependent manner. In Rickettsia prowazekii (strain Madrid E), this protein is DNA gyrase subunit A.